The sequence spans 404 residues: UPF0261 protein CTC_01794 (404 aa).

It belongs to the UPF0261 family.

This chain is UPF0261 protein CTC_01794, found in Clostridium tetani (strain Massachusetts / E88).